The sequence spans 88 residues: Small ribosomal subunit protein uS15c (88 aa).

The protein belongs to the universal ribosomal protein uS15 family. As to quaternary structure, part of the 30S ribosomal subunit.

It is found in the plastid. It localises to the chloroplast. The protein is Small ribosomal subunit protein uS15c (rps15) of Aethionema cordifolium (Lebanon stonecress).